The primary structure comprises 517 residues: Glucans biosynthesis protein G (517 aa).

Residues 1-28 (MKHKLQMMKMRWLSAAVMLTLYTSSSWA) form the signal peptide.

The protein belongs to the OpgD/OpgG family.

Its subcellular location is the periplasm. The protein operates within glycan metabolism; osmoregulated periplasmic glucan (OPG) biosynthesis. Its function is as follows. Involved in the biosynthesis of osmoregulated periplasmic glucans (OPGs). This chain is Glucans biosynthesis protein G, found in Escherichia coli O1:K1 / APEC.